Here is a 218-residue protein sequence, read N- to C-terminus: Orotate phosphoribosyltransferase (218 aa).

Residue Lys-26 coordinates 5-phospho-alpha-D-ribose 1-diphosphate. 34 to 35 contributes to the orotate binding site; that stretch reads FF. Residues 72-73, Arg-99, Lys-100, Lys-103, His-105, and 124-132 contribute to the 5-phospho-alpha-D-ribose 1-diphosphate site; these read YK and DDVITAGTA. 2 residues coordinate orotate: Thr-128 and Arg-156.

The protein belongs to the purine/pyrimidine phosphoribosyltransferase family. PyrE subfamily. In terms of assembly, homodimer. Mg(2+) serves as cofactor.

It carries out the reaction orotidine 5'-phosphate + diphosphate = orotate + 5-phospho-alpha-D-ribose 1-diphosphate. It participates in pyrimidine metabolism; UMP biosynthesis via de novo pathway; UMP from orotate: step 1/2. Functionally, catalyzes the transfer of a ribosyl phosphate group from 5-phosphoribose 1-diphosphate to orotate, leading to the formation of orotidine monophosphate (OMP). The protein is Orotate phosphoribosyltransferase of Hamiltonella defensa subsp. Acyrthosiphon pisum (strain 5AT).